The chain runs to 336 residues: Probable G-protein coupled receptor 160 (336 aa).

The Extracellular portion of the chain corresponds to Met-1–Ser-21. Residue Asn-8 is glycosylated (N-linked (GlcNAc...) asparagine). A helical membrane pass occupies residues Leu-22–Ile-42. The Cytoplasmic portion of the chain corresponds to Leu-43 to Glu-56. Residues Tyr-57–Thr-77 traverse the membrane as a helical segment. Over Tyr-78–Cys-95 the chain is Extracellular. A helical transmembrane segment spans residues Leu-96–Ala-116. Over Cys-117–Lys-136 the chain is Cytoplasmic. Residues Leu-137 to Asp-157 traverse the membrane as a helical segment. Topologically, residues Pro-158–Leu-187 are extracellular. The helical transmembrane segment at Ser-188–Ile-208 threads the bilayer. The Cytoplasmic portion of the chain corresponds to Gln-209–Arg-243. A helical membrane pass occupies residues Leu-244–Ser-264. Residues Leu-265–Tyr-272 lie on the Extracellular side of the membrane. The helical transmembrane segment at Ile-273 to Trp-293 threads the bilayer. Topologically, residues Phe-294–Cys-336 are cytoplasmic.

The protein belongs to the G-protein coupled receptor 1 family.

It localises to the cell membrane. Functionally, orphan receptor. The sequence is that of Probable G-protein coupled receptor 160 (Gpr160) from Rattus norvegicus (Rat).